Consider the following 396-residue polypeptide: S-adenosylmethionine synthase (396 aa).

Histidine 16 is an ATP binding site. Residue aspartate 18 participates in Mg(2+) binding. Glutamate 44 is a binding site for K(+). Positions 57 and 100 each coordinate L-methionine. The flexible loop stretch occupies residues 100-110 (QSVDIAQGVDR). ATP contacts are provided by residues 165–167 (DAK), aspartate 240, 246–247 (RK), alanine 263, and lysine 267. An L-methionine-binding site is contributed by aspartate 240. L-methionine is bound at residue lysine 271.

The protein belongs to the AdoMet synthase family. As to quaternary structure, homotetramer; dimer of dimers. It depends on Mg(2+) as a cofactor. The cofactor is K(+).

It localises to the cytoplasm. The catalysed reaction is L-methionine + ATP + H2O = S-adenosyl-L-methionine + phosphate + diphosphate. Its pathway is amino-acid biosynthesis; S-adenosyl-L-methionine biosynthesis; S-adenosyl-L-methionine from L-methionine: step 1/1. Catalyzes the formation of S-adenosylmethionine (AdoMet) from methionine and ATP. The overall synthetic reaction is composed of two sequential steps, AdoMet formation and the subsequent tripolyphosphate hydrolysis which occurs prior to release of AdoMet from the enzyme. This chain is S-adenosylmethionine synthase, found in Stutzerimonas stutzeri (strain A1501) (Pseudomonas stutzeri).